A 202-amino-acid chain; its full sequence is MAKGDPKKPKGKMSAYAFFVQTCREEHKKKNPEVPVNFAEFSKKCSERWKTMSSKEKAKFDEMAKADKVRYDREMKDYGPAKGGKKKKDPNAPKRPPSGFFLFCSEFRPKIKSTNPGISIGDVAKKLGEMWNNLSDGEKQPYNNKAAKLKEKYEKDVADYKSKGKFDGAKGAATKAARKKVEEEDEEEEEDEEEEDEDDDDE.

DNA-binding regions (HMG box) lie at residues 9–79 and 93–161; these read PKGK…KDYG and PKRP…ADYK. Cysteine sulfonic acid (-SO3H); alternate is present on residues cysteine 23 and cysteine 45. Cysteine 23 and cysteine 45 form a disulfide bridge. Positions 71-98 are disordered; it reads YDREMKDYGPAKGGKKKKDPNAPKRPPS. Cysteine 104 carries the post-translational modification Cysteine sulfonic acid (-SO3H). A disordered region spans residues 161–202; the sequence is KSKGKFDGAKGAATKAARKKVEEEDEEEEEDEEEEDEDDDDE. The segment covering 183-202 has biased composition (acidic residues); it reads EEDEEEEEDEEEEDEDDDDE.

It belongs to the HMGB family. Post-translationally, reduction/oxidation of cysteine residues Cys-23, Cys-45 and Cys-104 and a possible intramolecular disulfide bond involving Cys-23 and Cys-45 give rise to different redox forms with specific functional activities in various cellular compartments: 1- fully reduced HMGB3 (HMGB3C23hC45hC104h), 2- disulfide HMGB3 (HMGB3C23-C45C104h) and 3- sulfonyl HMGB3 (HMGB3C23soC45soC104so).

It is found in the nucleus. It localises to the chromosome. Its subcellular location is the cytoplasm. Its function is as follows. Multifunctional protein with various roles in different cellular compartments. May act in a redox sensitive manner. Associates with chromatin and binds DNA with a preference for non-canonical DNA structures such as single-stranded DNA. Can bend DNA and enhance DNA flexibility by looping thus providing a mechanism to promote activities on various gene promoters. Binds to the delta-1 crystallin/ASL1 enhancer. Proposed to be involved in the innate immune response to nucleic acids by acting as a cytoplasmic promiscuous immunogenic DNA/RNA sensor. The sequence is that of High mobility group protein B3 (HMGB3) from Gallus gallus (Chicken).